A 396-amino-acid polypeptide reads, in one-letter code: Dihydrolipoyllysine-residue acetyltransferase component of pyruvate dehydrogenase complex (396 aa).

A Lipoyl-binding domain is found at 1–69 (MPDIGLEEVE…KTDALIMRCE (69 aa)). K35 carries the post-translational modification N6-lipoyllysine. The Peripheral subunit-binding (PSBD) domain maps to 104 to 141 (HATPLIRRLARNLNINLYDVVGTGPKNRILKEDLDLYQ). H369 is an active-site residue.

It belongs to the 2-oxoacid dehydrogenase family. In terms of assembly, forms a 24-polypeptide structural core with octahedral symmetry. The cofactor is (R)-lipoate.

The enzyme catalyses N(6)-[(R)-dihydrolipoyl]-L-lysyl-[protein] + acetyl-CoA = N(6)-[(R)-S(8)-acetyldihydrolipoyl]-L-lysyl-[protein] + CoA. In terms of biological role, the pyruvate dehydrogenase complex catalyzes the overall conversion of pyruvate to acetyl-CoA and CO(2). It contains multiple copies of three enzymatic components: pyruvate dehydrogenase (E1), dihydrolipoamide acetyltransferase (E2) and lipoamide dehydrogenase (E3). In Buchnera aphidicola subsp. Acyrthosiphon pisum (strain APS) (Acyrthosiphon pisum symbiotic bacterium), this protein is Dihydrolipoyllysine-residue acetyltransferase component of pyruvate dehydrogenase complex (aceF).